The chain runs to 301 residues: NAD kinase 2 (301 aa).

Asp77 serves as the catalytic Proton acceptor. NAD(+) contacts are provided by residues Asp77–Gly78, Arg82, Asn151–Glu152, Lys162, Asp181, and Thr192–Ser197.

The protein belongs to the NAD kinase family. A divalent metal cation serves as cofactor.

It is found in the cytoplasm. It catalyses the reaction NAD(+) + ATP = ADP + NADP(+) + H(+). In terms of biological role, involved in the regulation of the intracellular balance of NAD and NADP, and is a key enzyme in the biosynthesis of NADP. Catalyzes specifically the phosphorylation on 2'-hydroxyl of the adenosine moiety of NAD to yield NADP. This Streptomyces coelicolor (strain ATCC BAA-471 / A3(2) / M145) protein is NAD kinase 2.